Consider the following 252-residue polypeptide: Aliphatic sulfonates import ATP-binding protein SsuB 1 (252 aa).

Residues 6–234 enclose the ABC transporter domain; the sequence is LQLHIAGKRF…PRDRQAHEAA (229 aa). 38–45 is an ATP binding site; the sequence is GASGCGKS.

The protein belongs to the ABC transporter superfamily. Aliphatic sulfonates importer (TC 3.A.1.17.2) family. In terms of assembly, the complex is composed of two ATP-binding proteins (SsuB), two transmembrane proteins (SsuC) and a solute-binding protein (SsuA).

The protein resides in the cell inner membrane. The catalysed reaction is ATP + H2O + aliphatic sulfonate-[sulfonate-binding protein]Side 1 = ADP + phosphate + aliphatic sulfonateSide 2 + [sulfonate-binding protein]Side 1.. Part of the ABC transporter complex SsuABC involved in aliphatic sulfonates import. Responsible for energy coupling to the transport system. The chain is Aliphatic sulfonates import ATP-binding protein SsuB 1 from Xanthomonas axonopodis pv. citri (strain 306).